A 312-amino-acid polypeptide reads, in one-letter code: DNA-directed RNA polymerase subunit alpha (312 aa).

The interval 1 to 229 (MLQYQIDRIE…ELFQPLATVT (229 aa)) is alpha N-terminal domain (alpha-NTD). An alpha C-terminal domain (alpha-CTD) region spans residues 236–312 (IEPEPSAEAQ…ISIPQSRTSV (77 aa)).

Belongs to the RNA polymerase alpha chain family. In terms of assembly, in cyanobacteria the RNAP catalytic core is composed of 2 alpha, 1 beta, 1 beta', 1 gamma and 1 omega subunit. When a sigma factor is associated with the core the holoenzyme is formed, which can initiate transcription.

The enzyme catalyses RNA(n) + a ribonucleoside 5'-triphosphate = RNA(n+1) + diphosphate. In terms of biological role, DNA-dependent RNA polymerase catalyzes the transcription of DNA into RNA using the four ribonucleoside triphosphates as substrates. This Synechococcus sp. (strain CC9311) protein is DNA-directed RNA polymerase subunit alpha.